Here is a 391-residue protein sequence, read N- to C-terminus: Succinate--CoA ligase [ADP-forming] subunit beta (391 aa).

The 240-residue stretch at 9–248 (KDILRKFGVS…TGEEDPFEVE (240 aa)) folds into the ATP-grasp domain. Residues Lys50, 57 to 59 (GRG), Glu103, Met106, and Glu111 contribute to the ATP site. The Mg(2+) site is built by Asn203 and Asp217. Substrate contacts are provided by residues Asn268 and 325–327 (GIV).

Belongs to the succinate/malate CoA ligase beta subunit family. Heterotetramer of two alpha and two beta subunits. The cofactor is Mg(2+).

The enzyme catalyses succinate + ATP + CoA = succinyl-CoA + ADP + phosphate. It carries out the reaction GTP + succinate + CoA = succinyl-CoA + GDP + phosphate. Its pathway is carbohydrate metabolism; tricarboxylic acid cycle; succinate from succinyl-CoA (ligase route): step 1/1. Functionally, succinyl-CoA synthetase functions in the citric acid cycle (TCA), coupling the hydrolysis of succinyl-CoA to the synthesis of either ATP or GTP and thus represents the only step of substrate-level phosphorylation in the TCA. The beta subunit provides nucleotide specificity of the enzyme and binds the substrate succinate, while the binding sites for coenzyme A and phosphate are found in the alpha subunit. This is Succinate--CoA ligase [ADP-forming] subunit beta from Chlorobium phaeobacteroides (strain BS1).